The sequence spans 266 residues: Large ribosomal subunit protein uL2c (266 aa).

The interval 1 to 24 is disordered; it reads MAIHLYKTSTPSTRNGTVDSQVKS. Over residues 7–24 the composition is skewed to polar residues; sequence KTSTPSTRNGTVDSQVKS.

It belongs to the universal ribosomal protein uL2 family. In terms of assembly, part of the 50S ribosomal subunit.

It localises to the plastid. The protein localises to the chloroplast. This is Large ribosomal subunit protein uL2c (rpl2) from Nicotiana debneyi (Debney's tobacco).